Consider the following 452-residue polypeptide: Tubulin alpha-6 chain (452 aa).

Residues Gln-11, Glu-69, Ser-138, Gly-142, Thr-143, Thr-177, Asn-204, and Asn-226 each contribute to the GTP site. Mg(2+) is bound at residue Glu-69. Residue Glu-252 is part of the active site.

It belongs to the tubulin family. As to quaternary structure, dimer of alpha and beta chains. A typical microtubule is a hollow water-filled tube with an outer diameter of 25 nm and an inner diameter of 15 nM. Alpha-beta heterodimers associate head-to-tail to form protofilaments running lengthwise along the microtubule wall with the beta-tubulin subunit facing the microtubule plus end conferring a structural polarity. Microtubules usually have 13 protofilaments but different protofilament numbers can be found in some organisms and specialized cells. Mg(2+) serves as cofactor.

It localises to the cytoplasm. It is found in the cytoskeleton. The protein localises to the spindle. The catalysed reaction is GTP + H2O = GDP + phosphate + H(+). Its function is as follows. Tubulin is the major constituent of microtubules, a cylinder consisting of laterally associated linear protofilaments composed of alpha- and beta-tubulin heterodimers. Microtubules grow by the addition of GTP-tubulin dimers to the microtubule end, where a stabilizing cap forms. Below the cap, tubulin dimers are in GDP-bound state, owing to GTPase activity of alpha-tubulin. The sequence is that of Tubulin alpha-6 chain (TUBA6) from Naegleria pringsheimi (Amoeba).